Consider the following 154-residue polypeptide: 3-hydroxyacyl-[acyl-carrier-protein] dehydratase FabZ (154 aa).

Residue histidine 54 is part of the active site.

The protein belongs to the thioester dehydratase family. FabZ subfamily.

It is found in the cytoplasm. The enzyme catalyses a (3R)-hydroxyacyl-[ACP] = a (2E)-enoyl-[ACP] + H2O. Functionally, involved in unsaturated fatty acids biosynthesis. Catalyzes the dehydration of short chain beta-hydroxyacyl-ACPs and long chain saturated and unsaturated beta-hydroxyacyl-ACPs. The chain is 3-hydroxyacyl-[acyl-carrier-protein] dehydratase FabZ from Chlamydia abortus (strain DSM 27085 / S26/3) (Chlamydophila abortus).